A 120-amino-acid polypeptide reads, in one-letter code: NAD(P)H-quinone oxidoreductase subunit 3 (120 aa).

3 helical membrane-spanning segments follow: residues Leu10 to Leu30, Met64 to Val84, and Leu89 to Val109.

It belongs to the complex I subunit 3 family. NDH-1 can be composed of about 15 different subunits; different subcomplexes with different compositions have been identified which probably have different functions.

It is found in the cellular thylakoid membrane. The catalysed reaction is a plastoquinone + NADH + (n+1) H(+)(in) = a plastoquinol + NAD(+) + n H(+)(out). It carries out the reaction a plastoquinone + NADPH + (n+1) H(+)(in) = a plastoquinol + NADP(+) + n H(+)(out). In terms of biological role, NDH-1 shuttles electrons from an unknown electron donor, via FMN and iron-sulfur (Fe-S) centers, to quinones in the respiratory and/or the photosynthetic chain. The immediate electron acceptor for the enzyme in this species is believed to be plastoquinone. Couples the redox reaction to proton translocation, and thus conserves the redox energy in a proton gradient. Cyanobacterial NDH-1 also plays a role in inorganic carbon-concentration. The sequence is that of NAD(P)H-quinone oxidoreductase subunit 3 from Synechococcus sp. (strain JA-3-3Ab) (Cyanobacteria bacterium Yellowstone A-Prime).